The chain runs to 372 residues: Type II methyltransferase M1.HphI (372 aa).

The 328-residue stretch at 45 to 372 folds into the SAM-dependent MTase C5-type domain; sequence LTYIDLFSGA…EAVLKMNTNE (328 aa). The active site involves Cys122.

The protein belongs to the class I-like SAM-binding methyltransferase superfamily. C5-methyltransferase family.

It carries out the reaction a 2'-deoxycytidine in DNA + S-adenosyl-L-methionine = a 5-methyl-2'-deoxycytidine in DNA + S-adenosyl-L-homocysteine + H(+). In terms of biological role, a methylase that recognizes the double-stranded sequence 5'-GGTGA-3' and protects the DNA from cleavage by the HphI endonuclease. Probably methylates C-2 on the bottom strand. This is Type II methyltransferase M1.HphI (hphIAM) from Haemophilus parahaemolyticus.